The primary structure comprises 143 residues: Turripeptide VIII-01 (143 aa).

An N-terminal signal peptide occupies residues M1 to A23. Residues E24–S32 constitute a propeptide that is removed on maturation.

Post-translationally, contains 4 disulfide bonds. As to expression, expressed by the venom duct.

Its subcellular location is the secreted. This Gemmula speciosa (Splendid gem-turris) protein is Turripeptide VIII-01.